A 445-amino-acid polypeptide reads, in one-letter code: Phosphoglucosamine mutase (445 aa).

The Phosphoserine intermediate role is filled by Ser-104. Mg(2+) contacts are provided by Ser-104, Asp-243, Asp-245, and Asp-247. Residue Ser-104 is modified to Phosphoserine.

Belongs to the phosphohexose mutase family. Requires Mg(2+) as cofactor. In terms of processing, activated by phosphorylation.

The enzyme catalyses alpha-D-glucosamine 1-phosphate = D-glucosamine 6-phosphate. In terms of biological role, catalyzes the conversion of glucosamine-6-phosphate to glucosamine-1-phosphate. The protein is Phosphoglucosamine mutase of Neisseria subflava.